Consider the following 284-residue polypeptide: Pantothenate synthetase (284 aa).

30-37 lines the ATP pocket; sequence MGNLHDGH. Residue His37 is the Proton donor of the active site. Gln61 contacts (R)-pantoate. Gln61 is a beta-alanine binding site. An ATP-binding site is contributed by 149-152; the sequence is GEKD. Gln155 is a binding site for (R)-pantoate. Residues Val178 and 186 to 189 each bind ATP; that span reads LSSR.

It belongs to the pantothenate synthetase family. As to quaternary structure, homodimer.

It is found in the cytoplasm. The catalysed reaction is (R)-pantoate + beta-alanine + ATP = (R)-pantothenate + AMP + diphosphate + H(+). It participates in cofactor biosynthesis; (R)-pantothenate biosynthesis; (R)-pantothenate from (R)-pantoate and beta-alanine: step 1/1. Its function is as follows. Catalyzes the condensation of pantoate with beta-alanine in an ATP-dependent reaction via a pantoyl-adenylate intermediate. This is Pantothenate synthetase from Photorhabdus laumondii subsp. laumondii (strain DSM 15139 / CIP 105565 / TT01) (Photorhabdus luminescens subsp. laumondii).